A 290-amino-acid polypeptide reads, in one-letter code: Pyridoxal kinase PdxY (290 aa).

Residues Ser12 and 47-48 contribute to the substrate site; that span reads TQ. Residues Asp114, Glu151, Lys184, and 211–214 each bind ATP; that span reads RPLL. Substrate is bound at residue Asp225.

It belongs to the pyridoxine kinase family. PdxY subfamily. Homodimer. Mg(2+) serves as cofactor.

The catalysed reaction is pyridoxal + ATP = pyridoxal 5'-phosphate + ADP + H(+). Its pathway is cofactor metabolism; pyridoxal 5'-phosphate salvage; pyridoxal 5'-phosphate from pyridoxal: step 1/1. Functionally, pyridoxal kinase involved in the salvage pathway of pyridoxal 5'-phosphate (PLP). Catalyzes the phosphorylation of pyridoxal to PLP. This Pseudomonas fluorescens (strain ATCC BAA-477 / NRRL B-23932 / Pf-5) protein is Pyridoxal kinase PdxY.